We begin with the raw amino-acid sequence, 177 residues long: ATP synthase subunit delta (177 aa).

This sequence belongs to the ATPase delta chain family. As to quaternary structure, F-type ATPases have 2 components, F(1) - the catalytic core - and F(0) - the membrane proton channel. F(1) has five subunits: alpha(3), beta(3), gamma(1), delta(1), epsilon(1). F(0) has three main subunits: a(1), b(2) and c(10-14). The alpha and beta chains form an alternating ring which encloses part of the gamma chain. F(1) is attached to F(0) by a central stalk formed by the gamma and epsilon chains, while a peripheral stalk is formed by the delta and b chains.

Its subcellular location is the cell inner membrane. In terms of biological role, f(1)F(0) ATP synthase produces ATP from ADP in the presence of a proton or sodium gradient. F-type ATPases consist of two structural domains, F(1) containing the extramembraneous catalytic core and F(0) containing the membrane proton channel, linked together by a central stalk and a peripheral stalk. During catalysis, ATP synthesis in the catalytic domain of F(1) is coupled via a rotary mechanism of the central stalk subunits to proton translocation. Its function is as follows. This protein is part of the stalk that links CF(0) to CF(1). It either transmits conformational changes from CF(0) to CF(1) or is implicated in proton conduction. In Shewanella oneidensis (strain ATCC 700550 / JCM 31522 / CIP 106686 / LMG 19005 / NCIMB 14063 / MR-1), this protein is ATP synthase subunit delta.